The following is a 396-amino-acid chain: Purine ribonucleoside efflux pump NepI (396 aa).

Over 1 to 21 the chain is Cytoplasmic; that stretch reads MSEFIAENRGADAITRPNWSA. A helical transmembrane segment spans residues 22 to 42; that stretch reads VFSVAFCVACLIIVEFLPVSL. Over 43–54 the chain is Periplasmic; that stretch reads LTPMAQDLGISE. The helical transmembrane segment at 55-75 threads the bilayer; sequence GVAGQSVTVTAFVAMFASLFI. Residues 76-85 are Cytoplasmic-facing; the sequence is TQTIQATDRR. Residues 86-106 form a helical membrane-spanning segment; it reads YVVILFAVLLTLSCLLVSFAN. Position 107 (S107) is a topological domain, periplasmic. Residues 108–128 form a helical membrane-spanning segment; that stretch reads FSLLLIGRACLGLALGGFWAM. Residues 129–147 are Cytoplasmic-facing; it reads SASLTMRLVPPRTVPKALS. A helical membrane pass occupies residues 148-168; it reads VIFGAVSIALVIAAPLGCFLG. Residues 169–175 are Periplasmic-facing; the sequence is ELIGWRN. The helical transmembrane segment at 176 to 196 threads the bilayer; the sequence is VFNAAAAMGVLCIFWIIKSLP. At 197–215 the chain is on the cytoplasmic side; sequence SLPGEPSHQKQNTFRLLQR. A helical transmembrane segment spans residues 216 to 236; sequence PGVMAGMIAIFMSFAGQFAFF. Topologically, residues 237–255 are periplasmic; the sequence is TYIRPVYMTLAGFGVDGLT. The helical transmembrane segment at 256 to 276 threads the bilayer; it reads LVLLSFGIASFVGTSLSSFIL. Residues 277 to 281 are Cytoplasmic-facing; it reads KRSVK. A helical membrane pass occupies residues 282–302; it reads LALAGAPFVLALSALVLTLWG. Over 303–305 the chain is Periplasmic; that stretch reads SDK. Residues 306-326 form a helical membrane-spanning segment; the sequence is IVATGVAIIWGLTFALIPVGW. The Cytoplasmic segment spans residues 327–343; that stretch reads STWITRSLADQAEKAGS. A helical membrane pass occupies residues 344-364; sequence IQVAVIQLANTCGAAIGGYAL. The Periplasmic portion of the chain corresponds to 365–366; the sequence is DN. A helical transmembrane segment spans residues 367 to 387; it reads IGLTSPLMLSGTLMLLTALLV. Topologically, residues 388-396 are cytoplasmic; the sequence is TAKVKMKKS.

This sequence belongs to the major facilitator superfamily. DHA1 family. NepI (TC 2.A.1.2.26) subfamily.

It is found in the cell inner membrane. It carries out the reaction inosine(in) + H(+)(out) = inosine(out) + H(+)(in). It catalyses the reaction guanosine(in) + H(+)(out) = guanosine(out) + H(+)(in). Functionally, involved in the efflux of purine ribonucleosides, such as inosine and guanosine. This Escherichia coli O157:H7 protein is Purine ribonucleoside efflux pump NepI.